Here is a 345-residue protein sequence, read N- to C-terminus: MVSSNFYKNLGPRKLTAIIDFLHDIIEPPKIHEDIAIHDIKILQEASPNDISFLSNPKYSEFLKTTKAAACIVPKNFTGEANPNTVLLHTQNSYFAYGKLIDFFYAPIKSYPAKIMKSAIVADSATIGKNCYIGHNVVIEDDVIIGDNSIIEAGSFIGRGVNIGRNARIEQHVSINYTIIGDDVVILAGAKIGQDGFGFSTEKGIHHKIFHIGIVKIGNNVEIGANTTIDRGSLQDTIIKDLCRIDNLVQIGHGVKIGKGSIIIAQTGIAGSSTIGKYCTLGGQVGIAGHLNIGDGAQVAAQGGVAQNIEAGKIVGGSPAVPIMDWHRQSIIMKQLLTSNSKLKK.

Residue H253 is the Proton acceptor of the active site.

The protein belongs to the transferase hexapeptide repeat family. LpxD subfamily. Homotrimer.

It carries out the reaction a UDP-3-O-[(3R)-3-hydroxyacyl]-alpha-D-glucosamine + a (3R)-hydroxyacyl-[ACP] = a UDP-2-N,3-O-bis[(3R)-3-hydroxyacyl]-alpha-D-glucosamine + holo-[ACP] + H(+). It participates in bacterial outer membrane biogenesis; LPS lipid A biosynthesis. Functionally, catalyzes the N-acylation of UDP-3-O-acylglucosamine using 3-hydroxyacyl-ACP as the acyl donor. Is involved in the biosynthesis of lipid A, a phosphorylated glycolipid that anchors the lipopolysaccharide to the outer membrane of the cell. This Rickettsia massiliae (strain Mtu5) protein is UDP-3-O-acylglucosamine N-acyltransferase.